The primary structure comprises 160 residues: Transcription elongation factor GreA (160 aa).

Residues 2–84 (KNTVNDKILL…SKAKIIKADL (83 aa)) adopt a coiled-coil conformation.

The protein belongs to the GreA/GreB family.

Its function is as follows. Necessary for efficient RNA polymerase transcription elongation past template-encoded arresting sites. The arresting sites in DNA have the property of trapping a certain fraction of elongating RNA polymerases that pass through, resulting in locked ternary complexes. Cleavage of the nascent transcript by cleavage factors such as GreA or GreB allows the resumption of elongation from the new 3'terminus. GreA releases sequences of 2 to 3 nucleotides. The sequence is that of Transcription elongation factor GreA from Mesomycoplasma hyopneumoniae (strain 232) (Mycoplasma hyopneumoniae).